Consider the following 117-residue polypeptide: Immunoglobulin heavy variable 3-5 (117 aa).

The first 18 residues, 1 to 18, serve as a signal peptide directing secretion; sequence MKMFTLLYLLTVVPGILS. Positions 19-117 constitute an Ig-like domain; it reads DVQLQESGPG…EDTATYYCAR (99 aa). Cysteines 40 and 115 form a disulfide.

The polypeptide is Immunoglobulin heavy variable 3-5 (Mus musculus (Mouse)).